A 258-amino-acid chain; its full sequence is D-aminoacyl-tRNA deacylase (258 aa).

This sequence belongs to the DtdA deacylase family. As to quaternary structure, monomer. It depends on Zn(2+) as a cofactor.

It carries out the reaction a D-aminoacyl-tRNA + H2O = a tRNA + a D-alpha-amino acid + H(+). The catalysed reaction is glycyl-tRNA(Ala) + H2O = tRNA(Ala) + glycine + H(+). Functionally, D-aminoacyl-tRNA deacylase with broad substrate specificity. By recycling D-aminoacyl-tRNA to D-amino acids and free tRNA molecules, this enzyme counteracts the toxicity associated with the formation of D-aminoacyl-tRNA entities in vivo. The chain is D-aminoacyl-tRNA deacylase from Cenarchaeum symbiosum (strain A).